A 340-amino-acid chain; its full sequence is Armadillo repeat-containing protein 12 (340 aa).

An interaction with TBC1D15 region spans residues 1–101 (MGKSIPQYLG…SITRCVYLLE (101 aa)). 3 ARM repeats span residues 100 to 139 (LEAE…AFSG), 179 to 218 (LPDY…YLAQ), and 278 to 318 (SLHE…SLQY).

Interacts with TBC1D15, TBC1D21, GK2 and IMMT. Interacts with VDAC2 and VDAC3 in a TBC1D21-dependent manner. Interacts (via ARM domains) with RBBP4. As to expression, expressed in testis. Highly expressed in the mid-piece of the elongated and late spermatids. Expressed at higher levels in neuroblastoma tissues and cell lines, than those of normal dorsal ganglia (at protein level). Expressed in breast cancer, colon cancer, hepatocellular carcinoma, lung cancer, pancreas cancer, prostate cancer, renal cancer and gastric cancer, but not in their normal counterparts.

It is found in the nucleus. It localises to the mitochondrion outer membrane. Functionally, essential for male fertility and sperm mitochondrial sheath formation. Required for proper mitochondrial elongation and coiling along the flagellum during the formation of the mitochondrial sheath. Facilitates the growth and aggressiveness of neuroblastoma cells. Increases the EZH2 activity and H3K27me3 levels in a RBBP4-dependent manner, and facilitates the enrichment of polycomb repressive complex 2 and H3K27me3 on gene promoters, resulting in transcriptional repression of tumor suppressors affecting the proliferation, invasion, and metastasis of tumor cells. The protein is Armadillo repeat-containing protein 12 (ARMC12) of Homo sapiens (Human).